The chain runs to 714 residues: Angiogenic factor with G patch and FHA domains 1 (714 aa).

Residues 1-18 (MASEAPSPPRSPPPPTSP) are compositionally biased toward pro residues. 3 disordered regions span residues 1-22 (MASE…EPEL), 259-307 (QPYP…HTSC), and 322-384 (IGIH…SYDE). N-acetylalanine is present on alanine 2. A phosphoserine mark is found at serine 7 and serine 11. Residues 18-88 (PEPELAQLRR…QRGRNEDNKK (71 aa)) are a coiled coil. The span at 279–298 (KDPDSSATNEEKDLNSEDQK) shows a compositional bias: basic and acidic residues. Residues 335-355 (VPTSGNTIESPLHENISNSTS) show a composition bias toward polar residues. Phosphoserine is present on serine 344. The segment covering 364–383 (TDSEPEEGEITDSQTEDSYD) has biased composition (acidic residues). Residues 434–487 (ATIGREKDMEHTLRIPEVGVSKFHAEIYFDHDLQSYVLVDQGSQNGTIVNGKQI) form the FHA domain. Over residues 586–609 (KYKDRAGKRREQVGSEGTFQRDDA) the composition is skewed to basic and acidic residues. Disordered regions lie at residues 586 to 617 (KYKD…HSEI) and 655 to 714 (RTHA…GTLE). Residues 619-665 (DSNKGRKMLEKMGWKKGEGLGKDGGGMKTPIQLQLRRTHAGLGTGKP) enclose the G-patch domain. Lysine 664 bears the N6-acetyllysine mark. The span at 680-690 (KNWDKARERFT) shows a compositional bias: basic and acidic residues.

As to quaternary structure, interacts with the secreted angiogenic factor TNFSF12. In terms of tissue distribution, widely expressed. Expressed in endothelial cells, vascular smooth muscle cells and osteoblasts. Expressed in umbilical vein endothelial cells and microvascular endothelial cells.

The protein resides in the cytoplasm. The protein localises to the secreted. Its function is as follows. Promotes angiogenesis and the proliferation of endothelial cells. Able to bind to endothelial cells and promote cell proliferation, suggesting that it may act in an autocrine fashion. The protein is Angiogenic factor with G patch and FHA domains 1 (AGGF1) of Homo sapiens (Human).